Consider the following 122-residue polypeptide: Large ribosomal subunit protein uL14 (122 aa).

Belongs to the universal ribosomal protein uL14 family. As to quaternary structure, part of the 50S ribosomal subunit. Forms a cluster with proteins L3 and L19. In the 70S ribosome, L14 and L19 interact and together make contacts with the 16S rRNA in bridges B5 and B8.

Its function is as follows. Binds to 23S rRNA. Forms part of two intersubunit bridges in the 70S ribosome. The protein is Large ribosomal subunit protein uL14 of Streptococcus pyogenes serotype M2 (strain MGAS10270).